The chain runs to 341 residues: Phosphate acyltransferase (341 aa).

It belongs to the PlsX family. As to quaternary structure, homodimer. Probably interacts with PlsY.

It localises to the cytoplasm. The catalysed reaction is a fatty acyl-[ACP] + phosphate = an acyl phosphate + holo-[ACP]. The protein operates within lipid metabolism; phospholipid metabolism. In terms of biological role, catalyzes the reversible formation of acyl-phosphate (acyl-PO(4)) from acyl-[acyl-carrier-protein] (acyl-ACP). This enzyme utilizes acyl-ACP as fatty acyl donor, but not acyl-CoA. The chain is Phosphate acyltransferase from Pseudoalteromonas atlantica (strain T6c / ATCC BAA-1087).